A 426-amino-acid chain; its full sequence is Probable imidazolonepropionase (426 aa).

Residues Tyr-159 and His-192 each coordinate 4-imidazolone-5-propanoate. N-formimidoyl-L-glutamate is bound at residue Tyr-159. Fe(3+) is bound at residue His-260. A Zn(2+)-binding site is contributed by His-260. A 4-imidazolone-5-propanoate-binding site is contributed by Glu-263. Position 334 (Asp-334) interacts with Fe(3+). Position 334 (Asp-334) interacts with Zn(2+). Residue Asn-336 coordinates N-formimidoyl-L-glutamate.

Belongs to the metallo-dependent hydrolases superfamily. HutI family. Zn(2+) serves as cofactor. Fe(3+) is required as a cofactor.

The catalysed reaction is 4-imidazolone-5-propanoate + H2O = N-formimidoyl-L-glutamate. Its pathway is amino-acid degradation; L-histidine degradation into L-glutamate; N-formimidoyl-L-glutamate from L-histidine: step 3/3. The sequence is that of Probable imidazolonepropionase (AMDHD1) from Homo sapiens (Human).